The following is a 489-amino-acid chain: Glycogen synthase (489 aa).

Arg-20 lines the ADP-alpha-D-glucose pocket.

The protein belongs to the glycosyltransferase 1 family. Bacterial/plant glycogen synthase subfamily.

It catalyses the reaction [(1-&gt;4)-alpha-D-glucosyl](n) + ADP-alpha-D-glucose = [(1-&gt;4)-alpha-D-glucosyl](n+1) + ADP + H(+). It participates in glycan biosynthesis; glycogen biosynthesis. Synthesizes alpha-1,4-glucan chains using ADP-glucose. The protein is Glycogen synthase of Chlorobium luteolum (strain DSM 273 / BCRC 81028 / 2530) (Pelodictyon luteolum).